The chain runs to 135 residues: MTELSKAEKVLKEFIIQMNQWELKYYPLFRNEGMTAYKDAAKKELDDIYDLFCTKKERKQGRQISLSCGEPPEYSPDEEVLSSELNKNKCVFITQQYTEAKNKFRYTLQFKEDEWRIDKKERFSFYDDKWIKYNL.

The tract at residues Arg-58–Asp-77 is disordered.

Functionally, immunity component of a toxin-immunity protein module, which functions as a cellular contact-dependent growth inhibition (CDI) system. Specifically inhibits its cognate toxin RhsA. Cell contact is necessary for growth inhibition. The polypeptide is Immunity protein RhsIA (rhsIA) (Dickeya dadantii (strain 3937) (Erwinia chrysanthemi (strain 3937))).